We begin with the raw amino-acid sequence, 226 residues long: 2,3-bisphosphoglycerate-dependent phosphoglycerate mutase (226 aa).

Substrate is bound by residues 8 to 15 (RHGQSVWN), 21 to 22 (TG), Arg-58, 109 to 112 (ERMY), Lys-120, 136 to 137 (RR), and 180 to 181 (GN). The active-site Tele-phosphohistidine intermediate is the His-9. Catalysis depends on Glu-109, which acts as the Proton donor/acceptor.

Belongs to the phosphoglycerate mutase family. BPG-dependent PGAM subfamily.

The catalysed reaction is (2R)-2-phosphoglycerate = (2R)-3-phosphoglycerate. Its pathway is carbohydrate degradation; glycolysis; pyruvate from D-glyceraldehyde 3-phosphate: step 3/5. Functionally, catalyzes the interconversion of 2-phosphoglycerate and 3-phosphoglycerate. The protein is 2,3-bisphosphoglycerate-dependent phosphoglycerate mutase of Chlamydia trachomatis serovar A (strain ATCC VR-571B / DSM 19440 / HAR-13).